Reading from the N-terminus, the 299-residue chain is MDIPDFSSISSRPTIFEFEGISMINHFTENWEKVKNFQARPDDILIATYPKAGTTWVSYILDLLYFGENAPEEHTSQPIYMRVPFLESCFKVIASGTELADNMTTSPRLIKTHLPVQLIPKSFWEQNSRVVYVARNAKDNVVSYFHFDRMNIVEPDPGDWNTFLHRFMDGKSVFGPWYDHVNGYWEKKQTYSNLLYLFYEDLVEDTGREVDRLCSFLGLSTSVSDREKITKDVQFDAMKQNKMTNYSTLPVMDFKISPFMRKGKVGDWKNHFTVAQNEQFDEVYKEKMKNATVKFRTEI.

Residue 51–56 coordinates 3'-phosphoadenylyl sulfate; that stretch reads KAGTTW. The active-site Proton acceptor is His113. 3'-phosphoadenylyl sulfate-binding positions include Arg135, Ser143, Tyr199, 233–238, and 261–263; these read VQFDAM and RKG.

The protein belongs to the sulfotransferase 1 family. Expressed in liver.

The protein localises to the cytoplasm. Inhibited by Co(2+), Zn(2+), Cd(2+) and Pb(2+) ions. Inactivated by Hg(2+) and Cu(2+) ions. Sulfotransferase that utilizes 3'-phospho-5'-adenylyl sulfate (PAPS) as sulfonate donor to catalyze the sulfate conjugation of a variety of xenobiotic and endogenous compounds, including 2-naphthol, hydroxychlorobiphenyls, dopamine and T3 (triiodo-L-thyronine). This chain is Cytosolic sulfotransferase 1, found in Danio rerio (Zebrafish).